A 292-amino-acid chain; its full sequence is Acetylglutamate kinase (292 aa).

Substrate-binding positions include 64-65 (GG), R86, and N190.

This sequence belongs to the acetylglutamate kinase family. ArgB subfamily.

The protein resides in the cytoplasm. It carries out the reaction N-acetyl-L-glutamate + ATP = N-acetyl-L-glutamyl 5-phosphate + ADP. It participates in amino-acid biosynthesis; L-arginine biosynthesis; N(2)-acetyl-L-ornithine from L-glutamate: step 2/4. Its function is as follows. Catalyzes the ATP-dependent phosphorylation of N-acetyl-L-glutamate. The chain is Acetylglutamate kinase from Leptospira biflexa serovar Patoc (strain Patoc 1 / Ames).